The primary structure comprises 100 residues: NADH-quinone oxidoreductase subunit K 1 (100 aa).

The next 3 membrane-spanning stretches (helical) occupy residues 3-23 (IIKA…LGVI), 28-48 (LITV…ALVA), and 60-80 (IFAF…LGLI).

The protein belongs to the complex I subunit 4L family. NDH-1 is composed of 14 different subunits. Subunits NuoA, H, J, K, L, M, N constitute the membrane sector of the complex.

It localises to the cell inner membrane. The enzyme catalyses a quinone + NADH + 5 H(+)(in) = a quinol + NAD(+) + 4 H(+)(out). Functionally, NDH-1 shuttles electrons from NADH, via FMN and iron-sulfur (Fe-S) centers, to quinones in the respiratory chain. The immediate electron acceptor for the enzyme in this species is believed to be ubiquinone. Couples the redox reaction to proton translocation (for every two electrons transferred, four hydrogen ions are translocated across the cytoplasmic membrane), and thus conserves the redox energy in a proton gradient. This is NADH-quinone oxidoreductase subunit K 1 from Aquifex aeolicus (strain VF5).